Consider the following 134-residue polypeptide: Small ribosomal subunit protein uS9 (134 aa).

The disordered stretch occupies residues 109–134; that stretch reads DARRTEPHKPSKSSKGPRAKRQKSYR. Residues 118 to 134 are compositionally biased toward basic residues; the sequence is PSKSSKGPRAKRQKSYR.

The protein belongs to the universal ribosomal protein uS9 family.

This Methanococcus maripaludis (strain DSM 14266 / JCM 13030 / NBRC 101832 / S2 / LL) protein is Small ribosomal subunit protein uS9.